The primary structure comprises 273 residues: Putative pyruvate, phosphate dikinase regulatory protein (273 aa).

151–158 (GVSRTSKT) contributes to the ADP binding site.

This sequence belongs to the pyruvate, phosphate/water dikinase regulatory protein family. PDRP subfamily.

The enzyme catalyses N(tele)-phospho-L-histidyl/L-threonyl-[pyruvate, phosphate dikinase] + ADP = N(tele)-phospho-L-histidyl/O-phospho-L-threonyl-[pyruvate, phosphate dikinase] + AMP + H(+). It catalyses the reaction N(tele)-phospho-L-histidyl/O-phospho-L-threonyl-[pyruvate, phosphate dikinase] + phosphate + H(+) = N(tele)-phospho-L-histidyl/L-threonyl-[pyruvate, phosphate dikinase] + diphosphate. Functionally, bifunctional serine/threonine kinase and phosphorylase involved in the regulation of the pyruvate, phosphate dikinase (PPDK) by catalyzing its phosphorylation/dephosphorylation. The polypeptide is Putative pyruvate, phosphate dikinase regulatory protein (Desulfitobacterium hafniense (strain Y51)).